The primary structure comprises 69 residues: Large ribosomal subunit protein bL32c (69 aa).

This sequence belongs to the bacterial ribosomal protein bL32 family.

Its subcellular location is the plastid. The protein localises to the chloroplast. The protein is Large ribosomal subunit protein bL32c (rpl32) of Marchantia polymorpha (Common liverwort).